A 674-amino-acid polypeptide reads, in one-letter code: Protein asunder (674 aa).

A coiled-coil region spans residues 516–538 (HKAKDQYRLLYRELEQLIQLNAS). The segment at 560-579 (PSKSEAGTANLRSFTESPLS) is disordered. Residues 564–577 (EAGTANLRSFTESP) are compositionally biased toward polar residues. Residues 601–607 (LKASKRR) carry the Nuclear localization signal (NLS) motif.

The protein belongs to the Integrator subunit 13 family. In terms of assembly, belongs to the multiprotein complex Integrator, at least composed of IntS1, IntS2, IntS3, IntS4, omd/IntS5, IntS6, defl/IntS7, IntS8, IntS9, IntS10, IntS11, IntS12, asun/IntS13, IntS14 and IntS15. The core complex associates with protein phosphatase 2A subunits mts/PP2A and Pp2A-29B, to form the Integrator-PP2A (INTAC) complex. Phosphorylated.

Its subcellular location is the nucleus. The protein localises to the cytoplasm. It localises to the perinuclear region. Functionally, component of the integrator complex, a multiprotein complex that terminates RNA polymerase II (Pol II) transcription in the promoter-proximal region of genes. The integrator complex provides a quality checkpoint during transcription elongation by driving premature transcription termination of transcripts that are unfavorably configured for transcriptional elongation: the complex terminates transcription by (1) catalyzing dephosphorylation of the C-terminal domain (CTD) of Pol II subunit Polr2A/Rbp1 and Spt5, and (2) degrading the exiting nascent RNA transcript via endonuclease activity. The integrator complex is also involved in the 3'-end processing of the U7 snRNA, and also the spliceosomal snRNAs U1, U2, U4 and U5. The chain is Protein asunder (asun) from Drosophila pseudoobscura pseudoobscura (Fruit fly).